Reading from the N-terminus, the 470-residue chain is Argininosuccinate lyase (470 aa).

This sequence belongs to the lyase 1 family. Argininosuccinate lyase subfamily.

The protein resides in the cytoplasm. The catalysed reaction is 2-(N(omega)-L-arginino)succinate = fumarate + L-arginine. Its pathway is amino-acid biosynthesis; L-arginine biosynthesis; L-arginine from L-ornithine and carbamoyl phosphate: step 3/3. This Leptospira interrogans serogroup Icterohaemorrhagiae serovar copenhageni (strain Fiocruz L1-130) protein is Argininosuccinate lyase.